Here is a 1998-residue protein sequence, read N- to C-terminus: Receptor-type tyrosine-protein phosphatase beta (1998 aa).

The signal sequence occupies residues 1 to 22; the sequence is MLRHGALTALWITLSVVQTGVA. 17 Fibronectin type-III domains span residues 23 to 109, 113 to 206, 207 to 291, 292 to 384, 378 to 466, 470 to 556, 557 to 642, 643 to 733, 734 to 821, 822 to 913, 908 to 994, 995 to 1088, 1086 to 1173, 1176 to 1263, 1264 to 1357, 1358 to 1449, and 1449 to 1551; these read EQVK…VLQT, PPAR…VPSP, VKDL…TAPM, EVSN…VRNL, PEKV…QGRT, AVLQ…TVPA, QVTD…EGRT, VPSS…TVPD, KVQG…TIPE, PVKD…TVKN, PSTV…LGQT, VPAS…VPAA, PAAV…GRTV, AVNH…TAPS, PPSL…TKPD, KIQN…IDRP, and PPQP…KLGA. The Extracellular portion of the chain corresponds to 23–1622; it reads EQVKCNFTLL…ESEPLFGVIE (1600 aa). N-linked (GlcNAc...) asparagine glycosylation is found at asparagine 28, asparagine 53, asparagine 75, asparagine 173, asparagine 199, and asparagine 268. N-linked (GlcNAc...) asparagine glycosylation is found at asparagine 415, asparagine 422, asparagine 480, asparagine 575, asparagine 599, and asparagine 653. N-linked (GlcNAc...) asparagine glycosylation is present at asparagine 830. N-linked (GlcNAc...) asparagine glycans are attached at residues asparagine 1041, asparagine 1097, asparagine 1164, asparagine 1186, asparagine 1213, asparagine 1275, asparagine 1368, asparagine 1471, asparagine 1475, and asparagine 1519. The helical transmembrane segment at 1623–1643 threads the bilayer; that stretch reads GVSAGLFLIGMLVALVAFFIC. At 1644 to 1997 the chain is on the cytoplasmic side; sequence RQKASHSRER…EYHRDAIYSR (354 aa). Positions 1704–1964 constitute a Tyrosine-protein phosphatase domain; that stretch reads LSKEYEDLKD…VYLHQCVRDV (261 aa). Substrate contacts are provided by residues aspartate 1871, 1905–1911, and glutamine 1949; that span reads CSAGVGR. Cysteine 1905 serves as the catalytic Phosphocysteine intermediate. At tyrosine 1982 the chain carries Phosphotyrosine.

The protein belongs to the protein-tyrosine phosphatase family. Receptor class 3 subfamily. As to quaternary structure, monomer. Interacts with TEK. Interacts via fibronectin type-III 17 domain with CDH5. Detected in a complex with CNTN1 and NRCAM. Interacts (phosphorylated form) with FYN and GRB2. Interacts with IGFBP2. Expression is very high in the vasculature of lung, spleen, and kidney, as well as in the heart valves, and is also present in the endothelium of arterioles and venules. Also expressed in tumor vasculature.

The protein localises to the membrane. It carries out the reaction O-phospho-L-tyrosyl-[protein] + H2O = L-tyrosyl-[protein] + phosphate. Plays an important role in blood vessel remodeling and angiogenesis. Not necessary for the initial formation of blood vessels, but is essential for their maintenance and remodeling. Can induce dephosphorylation of TEK/TIE2, CDH5/VE-cadherin and KDR/VEGFR-2. Regulates angiopoietin-TIE2 signaling in endothelial cells. Acts as a negative regulator of TIE2, and controls TIE2 driven endothelial cell proliferation, which in turn affects blood vessel remodeling during embryonic development and determines blood vessel size during perinatal growth. Essential for the maintenance of endothelial cell contact integrity and for the adhesive function of VE-cadherin in endothelial cells and this requires the presence of plakoglobin. This is Receptor-type tyrosine-protein phosphatase beta (Ptprb) from Mus musculus (Mouse).